A 92-amino-acid chain; its full sequence is Small ribosomal subunit protein uS19 (92 aa).

The disordered stretch occupies residues 72–92 (GEFSPTRSFRGHAGAKNKGKK). Basic residues predominate over residues 80-92 (FRGHAGAKNKGKK).

It belongs to the universal ribosomal protein uS19 family.

Protein S19 forms a complex with S13 that binds strongly to the 16S ribosomal RNA. The chain is Small ribosomal subunit protein uS19 from Flavobacterium johnsoniae (strain ATCC 17061 / DSM 2064 / JCM 8514 / BCRC 14874 / CCUG 350202 / NBRC 14942 / NCIMB 11054 / UW101) (Cytophaga johnsonae).